Reading from the N-terminus, the 386-residue chain is Leupaxin (386 aa).

Residue methionine 1 is modified to N-acetylmethionine. Positions 3–15 (ELDALLEELERST) match the LD motif 1 motif. The disordered stretch occupies residues 13–41 (RSTLQDSDEYSNPAPLPLDQHSRKETNLD). Phosphoserine is present on serine 19. Tyrosine 22 bears the Phosphotyrosine mark. Position 54 is a phosphoserine (serine 54). Tyrosine 62 carries the post-translational modification Phosphotyrosine. 2 consecutive short sequence motifs (LD motif) follow at residues 70 to 82 (NVYS…KESP) and 92 to 103 (QLDELMAHLTEM). The residue at position 72 (tyrosine 72) is a Phosphotyrosine; by LYN. Serine 81 carries the phosphoserine modification. LIM zinc-binding domains lie at 150 to 208 (GHCA…QLFS), 209 to 267 (PRCA…AMFS), 268 to 326 (PKCG…HRRG), and 327 to 386 (TLCH…LFPL).

This sequence belongs to the paxillin family. As to quaternary structure, interacts with PTPN22. Interacts with unphosphorylated ITGA4. Interacts with PTK2B/PYK2, PTPN12, AR and SRF. Interacts (via LD motif 3) with LYN and the interaction is induced upon B-cell antigen receptor (BCR) activation. Interacts (via LD motif 3) with PTK2/FAK. Phosphorylated on tyrosine residues. Phosphorylation on Tyr-72 is important for its inhibitory function. Bombesin stimulates phosphorylation on Tyr-22, Tyr-62 and Tyr-72. Macrophages, monocytes and osteoclasts (at protein level). Strongly expressed in cells and tissues of hematopoietic origin. Highest expression in lymphoid tissues such as spleen, lymph node, thymus and appendix and in the vascular smooth muscle. Lower levels in bone marrow and fetal liver. Also expressed in peripheral blood lymphocytes and a number of hematopoietic cell lines. Very low levels found in epithelial cell lines. Expressed in prostate cancer (PCa) cells and its expression intensity is directly linked to PCa progression.

Its subcellular location is the cytoplasm. The protein resides in the cell junction. It localises to the focal adhesion. The protein localises to the nucleus. It is found in the perinuclear region. Its subcellular location is the cell projection. The protein resides in the podosome. It localises to the cell membrane. In terms of biological role, transcriptional coactivator for androgen receptor (AR) and serum response factor (SRF). Contributes to the regulation of cell adhesion, spreading and cell migration and acts as a negative regulator in integrin-mediated cell adhesion events. Suppresses the integrin-induced tyrosine phosphorylation of paxillin (PXN). May play a critical role as an adapter protein in the formation of the adhesion zone in osteoclasts. Negatively regulates B-cell antigen receptor (BCR) signaling. This chain is Leupaxin (LPXN), found in Homo sapiens (Human).